We begin with the raw amino-acid sequence, 238 residues long: Ribosomal RNA small subunit methyltransferase G (238 aa).

Residues Gly-106, Leu-111, 157 to 158 (IE), and Arg-170 each bind S-adenosyl-L-methionine.

Belongs to the methyltransferase superfamily. RNA methyltransferase RsmG family.

Its subcellular location is the cytoplasm. It carries out the reaction guanosine(527) in 16S rRNA + S-adenosyl-L-methionine = N(7)-methylguanosine(527) in 16S rRNA + S-adenosyl-L-homocysteine. Functionally, specifically methylates the N7 position of guanine in position 527 of 16S rRNA. The polypeptide is Ribosomal RNA small subunit methyltransferase G (Psychrobacter arcticus (strain DSM 17307 / VKM B-2377 / 273-4)).